A 467-amino-acid polypeptide reads, in one-letter code: MSNTTNQSWGGRFSEPTDAFVARFTASVDFDRRLYHHDIRGSIAHATMLERVGVLTADERDAILQGLGEIEQEIDAGTFEWSVDLEDVHMNLEARLTEKIGITGKKLHTGRSRNDQIATDIRLYLRDAIDVVDAELARLREGLIELAAREADTIMPGFTHLQTAQPVTFGHHLLAWQEMLARDHERLRDCRKRVNVMPLGAAALAGTTYPIDRHITAELLGFERPAENSLDAVSDRDFAIEFGAFASVLLMHMSRMSEELVLWTSAQFDFIDLPDRFCTGSSIMPQKKNPDVPELVRGKTGRVYGHLMGLLTLMKSQPLAYNKDNQEDKEPLFDTLDTVQGCLKAFADMVPAIEAKADNMFEAARKGFSTATDLADYLVRAGVAFRDAHEIVGQAVALGLREKKDLSEMTLDELRQFSDAIGEDVFEVLTLEGSVAARNHIGGTAPDQVRAAAQRARDALATLRQEA.

Belongs to the lyase 1 family. Argininosuccinate lyase subfamily.

The protein localises to the cytoplasm. The catalysed reaction is 2-(N(omega)-L-arginino)succinate = fumarate + L-arginine. It functions in the pathway amino-acid biosynthesis; L-arginine biosynthesis; L-arginine from L-ornithine and carbamoyl phosphate: step 3/3. This is Argininosuccinate lyase from Chromohalobacter salexigens (strain ATCC BAA-138 / DSM 3043 / CIP 106854 / NCIMB 13768 / 1H11).